We begin with the raw amino-acid sequence, 63 residues long: Large ribosomal subunit protein uL29 (63 aa).

Belongs to the universal ribosomal protein uL29 family.

The polypeptide is Large ribosomal subunit protein uL29 (Flavobacterium johnsoniae (strain ATCC 17061 / DSM 2064 / JCM 8514 / BCRC 14874 / CCUG 350202 / NBRC 14942 / NCIMB 11054 / UW101) (Cytophaga johnsonae)).